A 249-amino-acid polypeptide reads, in one-letter code: Protein obstructor-E (249 aa).

The N-terminal stretch at 1–21 is a signal peptide; sequence MAKILISALLCVAMFGSMALG. The Chitin-binding type-2 1 domain occupies 22-80; the sequence is SPECPTPNGRFASGDQCDSYTECQDGTPVEKLCPDGLLFHQRTKATGECTYAPYSTCKE. A disulfide bridge connects residues Cys-54 and Cys-70. A glycan (N-linked (GlcNAc...) asparagine) is linked at Asn-88. 2 Chitin-binding type-2 domains span residues 90–148 and 170–227; these read TEEC…SCNA and VDVS…ECYA. Intrachain disulfides connect Cys-124/Cys-137 and Cys-203/Cys-216.

In terms of tissue distribution, uniformly expressed throughout the cuticle of third instar larva.

Its subcellular location is the secreted. The protein resides in the extracellular space. It localises to the extracellular matrix. Chitin-binding protein that is important for the longitudinal contraction and lateral expansion of the larval cuticle during its conversion into the oval-shaped puparium case. Essential for survival to the second instar larval stage. Confers the orientated contractility and expandability of the larval cuticle by regulating the arrangement of chitin and the formation of supracellular ridges on the cuticle of third instar larvae. Essential for determining pupal body shape; required for the orientated shape change of the cuticle during metamorphosis which involves changes in the morphology of the supracellular ridges. Functionally, mainly involved in regulating pupal shape. In terms of biological role, mainly involved in larvae survival, possibly by maintaining the normal morphology of the larval hindgut during development. The sequence is that of Protein obstructor-E from Drosophila melanogaster (Fruit fly).